The chain runs to 223 residues: DNA mismatch repair protein MutH (223 aa).

This sequence belongs to the MutH family.

It localises to the cytoplasm. Functionally, sequence-specific endonuclease that cleaves unmethylated GATC sequences. It is involved in DNA mismatch repair. The chain is DNA mismatch repair protein MutH from Haemophilus influenzae (strain ATCC 51907 / DSM 11121 / KW20 / Rd).